We begin with the raw amino-acid sequence, 179 residues long: ATP synthase subunit b (179 aa).

The helical transmembrane segment at 13–33 (IHIDELVFGLIAFAVIFALVY) threads the bilayer.

The protein belongs to the ATPase B chain family. F-type ATPases have 2 components, F(1) - the catalytic core - and F(0) - the membrane proton channel. F(1) has five subunits: alpha(3), beta(3), gamma(1), delta(1), epsilon(1). F(0) has three main subunits: a(1), b(2) and c(10-14). The alpha and beta chains form an alternating ring which encloses part of the gamma chain. F(1) is attached to F(0) by a central stalk formed by the gamma and epsilon chains, while a peripheral stalk is formed by the delta and b chains.

It localises to the cell membrane. Its function is as follows. F(1)F(0) ATP synthase produces ATP from ADP in the presence of a proton or sodium gradient. F-type ATPases consist of two structural domains, F(1) containing the extramembraneous catalytic core and F(0) containing the membrane proton channel, linked together by a central stalk and a peripheral stalk. During catalysis, ATP synthesis in the catalytic domain of F(1) is coupled via a rotary mechanism of the central stalk subunits to proton translocation. Functionally, component of the F(0) channel, it forms part of the peripheral stalk, linking F(1) to F(0). The protein is ATP synthase subunit b of Thermobifida fusca (strain YX).